A 312-amino-acid chain; its full sequence is Bifunctional pinoresinol-lariciresinol reductase 1 (312 aa).

Residues 10–16, Arg35, and Lys44 each bind NADP(+); that span reads GGTGYIG. The active-site Proton acceptor is the Lys136. Arg140 contributes to the NADP(+) binding site. Substrate is bound at residue His268.

It belongs to the NmrA-type oxidoreductase family. Isoflavone reductase subfamily. In terms of assembly, dimer. As to expression, expressed in seeds and roots, but not in stems. Detected in leaves.

The enzyme catalyses (-)-lariciresinol + NADP(+) = (-)-pinoresinol + NADPH + H(+). It carries out the reaction (+)-secoisolariciresinol + NADP(+) = (-)-lariciresinol + NADPH + H(+). Functionally, reductase involved in lignan biosynthesis. Catalyzes the enantioselective conversion of (-)-pinoresinol into (-)-lariciresinol and of (-)-lariciresinol into (+)-secoisolariciresinol. Abstracts the 4R-hydride from the NADPH cofactor during catalysis. In Linum usitatissimum (Flax), this protein is Bifunctional pinoresinol-lariciresinol reductase 1 (PLR_Lu1).